A 215-amino-acid polypeptide reads, in one-letter code: Mediator of RNA polymerase II transcription subunit 20 (215 aa).

The protein belongs to the Mediator complex subunit 20 family. In terms of assembly, component of the Mediator complex.

The protein resides in the nucleus. In terms of biological role, component of the Mediator complex, a coactivator involved in the regulated transcription of nearly all RNA polymerase II-dependent genes. Mediator functions as a bridge to convey information from gene-specific regulatory proteins to the basal RNA polymerase II transcription machinery. Mediator is recruited to promoters by direct interactions with regulatory proteins and serves as a scaffold for the assembly of a functional preinitiation complex with RNA polymerase II and the general transcription factors. The protein is Mediator of RNA polymerase II transcription subunit 20 (SRB2) of Candida glabrata (strain ATCC 2001 / BCRC 20586 / JCM 3761 / NBRC 0622 / NRRL Y-65 / CBS 138) (Yeast).